A 105-amino-acid polypeptide reads, in one-letter code: MVNNVTDISFKNEVLESDLPVIVDFWAEWCGPCKMLIPIIDEISKELQDKVKVLKMNIDENPKTPSEYGVRSIPTIMLFKNGEQKDTKIGLQQKKSLLDWINKSI.

The Thioredoxin domain occupies M1–I105. A disulfide bond links C30 and C33.

This sequence belongs to the thioredoxin family.

Functionally, component of the thioredoxin-thioredoxin reductase system. Participates in various redox reactions through the reversible oxidation of its active center dithiol to a disulfide and catalyzes dithiol-disulfide exchange reactions. This is Thioredoxin (trxA) from Rickettsia typhi (strain ATCC VR-144 / Wilmington).